Reading from the N-terminus, the 74-residue chain is Anionic peptide clone 8 (74 aa).

Positions 1 to 24 are cleaved as a signal peptide; sequence MVSKSLIVLLLVSVLVSTFFTTEA.

The protein belongs to the non-disulfide-bridged peptide (NDBP) superfamily. Long chain multifunctional peptide (group 2) family. As to expression, expressed by the venom gland.

It localises to the secreted. May be an antimicrobial peptide. This Tityus costatus (Brazilian scorpion) protein is Anionic peptide clone 8.